A 337-amino-acid chain; its full sequence is Monoacylglycerol lipase abhd6-B (337 aa).

Over 1–19 the chain is Extracellular; sequence MDIDVLNMFLVAGGTLLVP. Residues 20 to 42 traverse the membrane as a helical; Signal-anchor for type II membrane protein segment; sequence LLAFMTSFLLWPAALIRIYYWYW. Topologically, residues 43 to 337 are cytoplasmic; it reads RRALGMQVKY…QSTDNHKKHD (295 aa). Residues 72–313 form the AB hydrolase-1 domain; that stretch reads PSVLMLHGFS…CGHSVVMERP (242 aa). Residue Ser148 is the Nucleophile of the active site. Residues Asp278 and His306 each act as charge relay system in the active site.

It belongs to the AB hydrolase superfamily.

Its subcellular location is the late endosome membrane. It localises to the lysosome membrane. The protein localises to the mitochondrion membrane. It catalyses the reaction Hydrolyzes glycerol monoesters of long-chain fatty acids.. The catalysed reaction is 1-octanoylglycerol + H2O = octanoate + glycerol + H(+). It carries out the reaction 1-decanoylglycerol + H2O = decanoate + glycerol + H(+). The enzyme catalyses 1-dodecanoylglycerol + H2O = dodecanoate + glycerol + H(+). It catalyses the reaction 1-tetradecanoylglycerol + H2O = tetradecanoate + glycerol + H(+). The catalysed reaction is 2-hexadecanoylglycerol + H2O = glycerol + hexadecanoate + H(+). It carries out the reaction 2-(9Z-octadecenoyl)-glycerol + H2O = glycerol + (9Z)-octadecenoate + H(+). The enzyme catalyses 1-(9Z-octadecenoyl)-glycerol + H2O = glycerol + (9Z)-octadecenoate + H(+). It catalyses the reaction 2-(9Z,12Z-octadecadienoyl)-glycerol + H2O = (9Z,12Z)-octadecadienoate + glycerol + H(+). The catalysed reaction is 2-(5Z,8Z,11Z,14Z-eicosatetraenoyl)-glycerol + H2O = glycerol + (5Z,8Z,11Z,14Z)-eicosatetraenoate + H(+). It carries out the reaction 1-(5Z,8Z,11Z,14Z-eicosatetraenoyl)-glycerol + H2O = glycerol + (5Z,8Z,11Z,14Z)-eicosatetraenoate + H(+). The enzyme catalyses 1-(9Z,12Z-octadecadienoyl)-glycerol + H2O = (9Z,12Z)-octadecadienoate + glycerol + H(+). It catalyses the reaction 3-(9Z-octadecenoyl)-sn-glycero-1-phospho-(3'-(9Z-octadecenoyl)-1'-sn-glycerol) + H2O = 3-(9Z-octadecenoyl)-sn-glycero-1-phospho-(1'-sn-glycerol) + (9Z)-octadecenoate + H(+). The catalysed reaction is (S,S)-2-(9Z-octadecenoyl)-sn-glycero-1-phospho-(2'-(9Z-octadecenoyl)-1'-sn-glycerol) + H2O = (S,S)-2-(9Z-octadecenoyl)-sn-glycero-1-phospho-(1'-sn-glycerol) + (9Z)-octadecenoate + H(+). It carries out the reaction (R,R)-2-(9Z-octadecenoyl)-sn-glycero-3-phospho-(2'-(9Z-octadecenoyl)-3'-sn-glycerol) + H2O = (R,R)-2-(9Z-octadecenoyl)-sn-glycero-3-phospho-(3'-sn-glycerol) + (9Z)-octadecenoate + H(+). Functionally, lipase that preferentially hydrolysis medium-chain saturated monoacylglycerols including 2-arachidonoylglycerol. Through 2-arachidonoylglycerol degradation may regulate endocannabinoid signaling pathways. Also has a lysophosphatidyl lipase activity with a preference for lysophosphatidylglycerol among other lysophospholipids. Also able to degrade bis(monoacylglycero)phosphate (BMP) and constitutes the major enzyme for BMP catabolism. BMP, also known as lysobisphosphatidic acid, is enriched in late endosomes and lysosomes and plays a key role in the formation of intraluminal vesicles and in lipid sorting. This is Monoacylglycerol lipase abhd6-B (abhd6-b) from Xenopus laevis (African clawed frog).